We begin with the raw amino-acid sequence, 219 residues long: Protoglabretal synthase ISM2 (219 aa).

Helical transmembrane passes span 26-46 (VHAW…VLAG), 59-79 (LMIW…YWLF), 112-132 (AVVG…LFAV), 144-164 (ILQL…FITA), and 178-198 (YYKY…LIII). The EXPERA domain maps to 55-197 (TDKWLMIWWA…TWLLFPALII (143 aa)).

Belongs to the EBP family.

The protein resides in the membrane. The catalysed reaction is 7,8-epoxymelianol = protoglabretal. The protein operates within secondary metabolite biosynthesis; terpenoid biosynthesis. Functionally, isomerase involved in the biosynthesis of glabretanes triterpene natural products such as glabretal, a component with in vitro antiproliferative properties on lymphocytes. Catalyzes the conversion of 7,8-epoxymelianol to protoglabretal via skeletal rearrangements. The sequence is that of Protoglabretal synthase ISM2 from Ailanthus altissima (Tree-of-heaven).